A 222-amino-acid polypeptide reads, in one-letter code: Latexin (222 aa).

Residues 1–97 (MEIPPTNYPA…NFTFEGETGK (97 aa)) form the Cystatin LXN-type 1 domain. The residue at position 55 (lysine 55) is an N6-acetyllysine. The tract at residues 98 to 117 (NPDEEDNTFYQRLKSMKEPL) is alpha-helical linker. The Cystatin LXN-type 2 domain occupies 118–222 (EAQNIPDNFG…SRLPKEVQLE (105 aa)).

This sequence belongs to the protease inhibitor I47 (latexin) family. As to expression, highly expressed in heart, prostate, ovary, kidney, pancreas, and colon, moderate or low in other tissues including brain.

Its subcellular location is the cytoplasm. Functionally, hardly reversible, non-competitive, and potent inhibitor of CPA1, CPA2 and CPA4. May play a role in inflammation. This Homo sapiens (Human) protein is Latexin (LXN).